A 384-amino-acid chain; its full sequence is Acetylornithine aminotransferase (384 aa).

Residues 94-95 and Phe-121 contribute to the pyridoxal 5'-phosphate site; that span reads GT. Arg-124 is a N(2)-acetyl-L-ornithine binding site. Pyridoxal 5'-phosphate is bound at residue 206 to 209; it reads DEVQ. N6-(pyridoxal phosphate)lysine is present on Lys-235. Ser-263 contributes to the N(2)-acetyl-L-ornithine binding site. Thr-264 lines the pyridoxal 5'-phosphate pocket.

It belongs to the class-III pyridoxal-phosphate-dependent aminotransferase family. ArgD subfamily. In terms of assembly, homodimer. Pyridoxal 5'-phosphate is required as a cofactor.

The protein localises to the cytoplasm. The enzyme catalyses N(2)-acetyl-L-ornithine + 2-oxoglutarate = N-acetyl-L-glutamate 5-semialdehyde + L-glutamate. It functions in the pathway amino-acid biosynthesis; L-arginine biosynthesis; N(2)-acetyl-L-ornithine from L-glutamate: step 4/4. The sequence is that of Acetylornithine aminotransferase from Listeria innocua serovar 6a (strain ATCC BAA-680 / CLIP 11262).